Here is a 483-residue protein sequence, read N- to C-terminus: 23S rRNA (uracil(1939)-C(5))-methyltransferase RlmD (483 aa).

Basic residues predominate over residues 1–11 (MTGLGKRRPAR). The interval 1–36 (MTGLGKRRPARSRSGVSGLRERRQPASVERSAGSEG) is disordered. The TRAM domain occupies 29–90 (ERSAGSEGRR…KRFDEAHVSE (62 aa)). 4 residues coordinate [4Fe-4S] cluster: cysteine 103, cysteine 109, cysteine 112, and cysteine 189. S-adenosyl-L-methionine contacts are provided by glutamine 298, phenylalanine 332, asparagine 337, glutamate 353, aspartate 379, and aspartate 401. Cysteine 427 acts as the Nucleophile in catalysis.

The protein belongs to the class I-like SAM-binding methyltransferase superfamily. RNA M5U methyltransferase family. RlmD subfamily.

The enzyme catalyses uridine(1939) in 23S rRNA + S-adenosyl-L-methionine = 5-methyluridine(1939) in 23S rRNA + S-adenosyl-L-homocysteine + H(+). In terms of biological role, catalyzes the formation of 5-methyl-uridine at position 1939 (m5U1939) in 23S rRNA. The sequence is that of 23S rRNA (uracil(1939)-C(5))-methyltransferase RlmD from Halomonas elongata (strain ATCC 33173 / DSM 2581 / NBRC 15536 / NCIMB 2198 / 1H9).